The following is a 399-amino-acid chain: S-adenosylmethionine synthase (399 aa).

H17 serves as a coordination point for ATP. A Mg(2+)-binding site is contributed by D19. A K(+)-binding site is contributed by E45. Residues E58 and Q101 each coordinate L-methionine. Residues 101 to 111 (QSADIAMGVDQ) are flexible loop. ATP-binding positions include 177 to 179 (DGK), 244 to 245 (RF), D253, 259 to 260 (RK), A276, and K280. Residue D253 participates in L-methionine binding. K284 is an L-methionine binding site.

The protein belongs to the AdoMet synthase family. Homotetramer; dimer of dimers. The cofactor is Mg(2+). K(+) serves as cofactor.

It localises to the cytoplasm. The enzyme catalyses L-methionine + ATP + H2O = S-adenosyl-L-methionine + phosphate + diphosphate. Its pathway is amino-acid biosynthesis; S-adenosyl-L-methionine biosynthesis; S-adenosyl-L-methionine from L-methionine: step 1/1. Functionally, catalyzes the formation of S-adenosylmethionine (AdoMet) from methionine and ATP. The overall synthetic reaction is composed of two sequential steps, AdoMet formation and the subsequent tripolyphosphate hydrolysis which occurs prior to release of AdoMet from the enzyme. The chain is S-adenosylmethionine synthase from Bacillus cereus (strain B4264).